Here is a 430-residue protein sequence, read N- to C-terminus: Oleandomycin glycosyltransferase (430 aa).

The disordered stretch occupies residues 385 to 430 (GGTRRAADLIEAELPARHERQEPVGDRPNVGDRPAGVRSDRQRSAL). The span at 386–409 (GTRRAADLIEAELPARHERQEPVG) shows a compositional bias: basic and acidic residues.

Belongs to the UDP-glycosyltransferase family.

In terms of biological role, specifically inactivates oleandomycin via 2'-O-glycosylation using UDP-glucose. In Streptomyces antibioticus, this protein is Oleandomycin glycosyltransferase (oleD).